Here is a 151-residue protein sequence, read N- to C-terminus: Transcriptional repressor NrdR (151 aa).

The segment at 3 to 34 (CPYCGYEETRVLDSRVDSSGMTVRRRRECVKC) is a zinc-finger region. The ATP-cone domain occupies 49–139 (VFVVKKDGKR…VYKDFREIDQ (91 aa)).

This sequence belongs to the NrdR family. Zn(2+) serves as cofactor.

In terms of biological role, negatively regulates transcription of bacterial ribonucleotide reductase nrd genes and operons by binding to NrdR-boxes. The protein is Transcriptional repressor NrdR of Thermosipho melanesiensis (strain DSM 12029 / CIP 104789 / BI429).